A 542-amino-acid polypeptide reads, in one-letter code: Chaperonin GroEL 1 (542 aa).

ATP contacts are provided by residues 30 to 33 (TLGP), Lys51, 87 to 91 (DGTTT), Gly415, 480 to 482 (NAA), and Asp496.

This sequence belongs to the chaperonin (HSP60) family. In terms of assembly, forms a cylinder of 14 subunits composed of two heptameric rings stacked back-to-back. Interacts with the co-chaperonin GroES.

The protein resides in the cytoplasm. It catalyses the reaction ATP + H2O + a folded polypeptide = ADP + phosphate + an unfolded polypeptide.. In terms of biological role, together with its co-chaperonin GroES, plays an essential role in assisting protein folding. The GroEL-GroES system forms a nano-cage that allows encapsulation of the non-native substrate proteins and provides a physical environment optimized to promote and accelerate protein folding. The protein is Chaperonin GroEL 1 of Nitrobacter winogradskyi (strain ATCC 25391 / DSM 10237 / CIP 104748 / NCIMB 11846 / Nb-255).